The sequence spans 71 residues: Small ribosomal subunit protein bS21 (71 aa).

The interval 47-71 (RENATRAKRHAKRVARENARNTRLY) is disordered. The segment covering 60–71 (VARENARNTRLY) has biased composition (basic and acidic residues).

Belongs to the bacterial ribosomal protein bS21 family.

The protein is Small ribosomal subunit protein bS21 of Histophilus somni (strain 129Pt) (Haemophilus somnus).